Reading from the N-terminus, the 414-residue chain is Glutamyl-tRNA reductase (414 aa).

Substrate contacts are provided by residues 49-52, Ser-108, 113-115, and Gln-119; these read TCNR and EPQ. Cys-50 functions as the Nucleophile in the catalytic mechanism. 188 to 193 contacts NADP(+); the sequence is GAGQTG.

The protein belongs to the glutamyl-tRNA reductase family. In terms of assembly, homodimer.

The enzyme catalyses (S)-4-amino-5-oxopentanoate + tRNA(Glu) + NADP(+) = L-glutamyl-tRNA(Glu) + NADPH + H(+). It functions in the pathway porphyrin-containing compound metabolism; protoporphyrin-IX biosynthesis; 5-aminolevulinate from L-glutamyl-tRNA(Glu): step 1/2. Catalyzes the NADPH-dependent reduction of glutamyl-tRNA(Glu) to glutamate 1-semialdehyde (GSA). This chain is Glutamyl-tRNA reductase, found in Francisella tularensis subsp. holarctica (strain LVS).